The following is a 197-amino-acid chain: Thymidine kinase (197 aa).

Residues 9 to 16 (AAMNAGKS) and 83 to 86 (DESQ) each bind ATP. Glu84 acts as the Proton acceptor in catalysis. The Zn(2+) site is built by Cys141, Cys143, Cys178, and Cys181.

This sequence belongs to the thymidine kinase family. Homotetramer.

It is found in the cytoplasm. It catalyses the reaction thymidine + ATP = dTMP + ADP + H(+). The protein is Thymidine kinase of Albidiferax ferrireducens (strain ATCC BAA-621 / DSM 15236 / T118) (Rhodoferax ferrireducens).